The primary structure comprises 217 residues: 3-oxoadipate CoA-transferase subunit B (217 aa).

E50 is a catalytic residue.

This sequence belongs to the 3-oxoacid CoA-transferase subunit B family. As to quaternary structure, heterodimer.

The enzyme catalyses 3-oxoadipate + succinyl-CoA = 3-oxoadipyl-CoA + succinate. Its pathway is aromatic compound metabolism; beta-ketoadipate pathway; acetyl-CoA and succinyl-CoA from 3-oxoadipate: step 1/2. In Acinetobacter baylyi (strain ATCC 33305 / BD413 / ADP1), this protein is 3-oxoadipate CoA-transferase subunit B (pcaJ).